A 926-amino-acid polypeptide reads, in one-letter code: OTU domain-containing protein 7A (926 aa).

The tract at residues 75-99 (PHVFNEGRGPKQPEREPQPGHKVER) is disordered. The span at 82 to 99 (RGPKQPEREPQPGHKVER) shows a compositional bias: basic and acidic residues. Ser119 bears the Phosphoserine mark. Residues 168-410 (ERDLIEQATM…AVDPGKDWEW (243 aa)) are TRAF-binding. Residues 183 to 449 (AGRLNWWSTV…VTWIRIPSET (267 aa)) form a catalytic region. An OTU domain is found at 199–374 (LLPLATTGDG…QAHFSALVSM (176 aa)). The active site involves Asp207. Cys210 serves as the catalytic Nucleophile. His367 acts as the Proton acceptor in catalysis. Disordered regions lie at residues 452–514 (PLAQ…DSVA), 537–613 (GLVH…DAWK), and 668–768 (EQEQ…APAR). Low complexity predominate over residues 481–491 (VCSNSNSNNGK). The span at 492-510 (NGKDKEKEKQRKEKDKTRA) shows a compositional bias: basic and acidic residues. The Nuclear localization signal signature appears at 494 to 509 (KDKEKEKQRKEKDKTR). 3 stretches are compositionally biased toward low complexity: residues 576-592 (GASASTSPSEKTTPSPT), 677-691 (ATAAAAAAAAAAATA), and 729-742 (PAAGRAARAAAGGT). Omega-N-methylarginine is present on Arg880. The segment at 884–919 (GPVQRRCQRENCAFYGRAETEHYCSYCYREELRRRR) adopts an A20-type zinc-finger fold. Zn(2+) is bound by residues Cys890, Cys895, Cys907, and Cys910.

This sequence belongs to the peptidase C64 family.

It is found in the cytoplasm. It localises to the nucleus. The enzyme catalyses Thiol-dependent hydrolysis of ester, thioester, amide, peptide and isopeptide bonds formed by the C-terminal Gly of ubiquitin (a 76-residue protein attached to proteins as an intracellular targeting signal).. Its function is as follows. Deubiquitinase, which cleaves 'Lys-11'-linked polyubiquitin chains. Might be required for PA28-20S proteasome assembly. The chain is OTU domain-containing protein 7A (OTUD7A) from Homo sapiens (Human).